The following is a 486-amino-acid chain: UDP-N-acetylmuramoyl-L-alanyl-D-glutamate--2,6-diaminopimelate ligase (486 aa).

Residue S30 participates in UDP-N-acetyl-alpha-D-muramoyl-L-alanyl-D-glutamate binding. 111 to 117 (GTNGKTT) is a binding site for ATP. UDP-N-acetyl-alpha-D-muramoyl-L-alanyl-D-glutamate is bound by residues 153–154 (TT), S180, Q186, and R188. K220 is subject to N6-carboxylysine. Meso-2,6-diaminopimelate is bound by residues R378, 402-405 (DNPR), G455, and E459. The Meso-diaminopimelate recognition motif signature appears at 402 to 405 (DNPR).

Belongs to the MurCDEF family. MurE subfamily. The cofactor is Mg(2+). Post-translationally, carboxylation is probably crucial for Mg(2+) binding and, consequently, for the gamma-phosphate positioning of ATP.

It localises to the cytoplasm. It carries out the reaction UDP-N-acetyl-alpha-D-muramoyl-L-alanyl-D-glutamate + meso-2,6-diaminopimelate + ATP = UDP-N-acetyl-alpha-D-muramoyl-L-alanyl-gamma-D-glutamyl-meso-2,6-diaminopimelate + ADP + phosphate + H(+). It functions in the pathway cell wall biogenesis; peptidoglycan biosynthesis. Catalyzes the addition of meso-diaminopimelic acid to the nucleotide precursor UDP-N-acetylmuramoyl-L-alanyl-D-glutamate (UMAG) in the biosynthesis of bacterial cell-wall peptidoglycan. The sequence is that of UDP-N-acetylmuramoyl-L-alanyl-D-glutamate--2,6-diaminopimelate ligase from Parabacteroides distasonis (strain ATCC 8503 / DSM 20701 / CIP 104284 / JCM 5825 / NCTC 11152).